Here is a 307-residue protein sequence, read N- to C-terminus: Membrane protein insertase YidC 1 (307 aa).

An N-terminal signal peptide occupies residues 1–22 (MKSKKGLTLTITLGTLALFLSG). A lipid anchor (N-palmitoyl cysteine) is attached at Cys23. A lipid anchor (S-diacylglycerol cysteine) is attached at Cys23. A run of 5 helical transmembrane segments spans residues 59–79 (YGWAIIGLTVIVRLVLLPMMI), 136–156 (GIGCLPLLIQLPIFSALYYAI), 177–197 (LILAILAFLSYLAQGYLSMIG), 205–225 (TMRLMLIMSPVMILFVSMSAP), and 226–246 (AGLGLYFFVGGLFACLQTLII). The interval 260 to 307 (ELKKHPIKTPTPTQPKPINATESKPSHPRPQNNAGRGRNAGKQQRHHK) is disordered.

The protein belongs to the OXA1/ALB3/YidC family. Type 2 subfamily.

It is found in the cell membrane. Its function is as follows. Required for the insertion and/or proper folding and/or complex formation of integral membrane proteins into the membrane. Involved in integration of membrane proteins that insert both dependently and independently of the Sec translocase complex, as well as at least some lipoproteins. The chain is Membrane protein insertase YidC 1 from Lactiplantibacillus plantarum (strain ATCC BAA-793 / NCIMB 8826 / WCFS1) (Lactobacillus plantarum).